Consider the following 315-residue polypeptide: Protein SHORT INTERNODES 1 (315 aa).

The segment covering 1 to 10 (MAGFPLGGGS) has biased composition (gly residues). Disordered regions lie at residues 1 to 24 (MAGF…PPVH) and 64 to 92 (PPAP…GGGG). A compositionally biased stretch (low complexity) spans 70–82 (AGASSSSSSRGMR). Positions 83–92 (SSGGGGGGGG) are enriched in gly residues. Zn(2+) is bound by residues Cys-97, Cys-100, Cys-108, Cys-113, Cys-117, and Cys-124. Positions 97 to 124 (CQDCGNQAKKDCTHMRCRTCCKSRGFAC) form a DNA-binding region, zn(2)-C6 fungal-type; degenerate. Low complexity-rich tracts occupy residues 143 to 156 (QQLA…AATA) and 172 to 182 (RPSATTPTTSS). The disordered stretch occupies residues 143 to 186 (QQLAALAASAAATAGGAGPSRDPTKRPRARPSATTPTTSSGDQQ). Positions 227–230 (IGGH) match the Required for homo- and heterodimerization motif.

The protein belongs to the SHI protein family. Forms homodimers (via C-terminus). Interacts with SPL14/IPA1 (via C-terminus). As to expression, predominantly expressed in axillary buds and young panicles.

Its subcellular location is the nucleus. In terms of biological role, regulates tillering and panicle branching by modulating SPL14/IPA1 transcriptional activity on the downstream TB1 and DEP1 target genes. Binds directly to the 5'-T/GCTCTAC-3' DNA motif found in the promoter regions of both TB1 and DEP1. Represses the DNA binding activity of SPL14/IPA1 toward the promoters of both TB1 and DEP1. Exhibits weak transcriptional activation activity in yeast cells. In Oryza sativa subsp. japonica (Rice), this protein is Protein SHORT INTERNODES 1.